The following is a 287-amino-acid chain: Outer membrane protein TP0453 (287 aa).

The N-terminal stretch at 1-24 (MIRRRYRGCTQGAWIVSVGMLFAS) is a signal peptide. Cys-25 carries N-palmitoyl cysteine lipidation. Cys-25 carries S-diacylglycerol cysteine lipidation. Amphipathic helix regions lie at residues 36–40 (PLGVV), 56–63 (ENLISRII), 69–77 (KADIKKIVD), 103–112 (YAFTNLIFSR), 155–162 (MSKMLSRL), 172–179 (PRFEKECT), 194–202 (GGHFITKLL), 240–250 (FPIQFLISRVL), and 270–279 (AERLASVISS).

In terms of assembly, a mix of monomer and dimers; may integrate into the membrane as a dimer. In terms of processing, palmitoylated upon expression of a fusion protein with first 46 residues fused to PhoA in E.coli.

Its subcellular location is the cell outer membrane. Functionally, might be involved in ligand transport, alters membrane permeability at acidic pH (4.0 to 5.5). Incubation of the non-lipidated form with lipid vesicles increases their permeability. This Treponema pallidum (strain Nichols) protein is Outer membrane protein TP0453.